The primary structure comprises 130 residues: Ribosome-binding factor A (130 aa).

The protein belongs to the RbfA family. In terms of assembly, monomer. Binds 30S ribosomal subunits, but not 50S ribosomal subunits or 70S ribosomes.

Its subcellular location is the cytoplasm. In terms of biological role, one of several proteins that assist in the late maturation steps of the functional core of the 30S ribosomal subunit. Associates with free 30S ribosomal subunits (but not with 30S subunits that are part of 70S ribosomes or polysomes). Required for efficient processing of 16S rRNA. May interact with the 5'-terminal helix region of 16S rRNA. This chain is Ribosome-binding factor A, found in Prochlorococcus marinus (strain SARG / CCMP1375 / SS120).